The chain runs to 512 residues: Probable DNA ligase (512 aa).

D217 lines the ATP pocket. K219 serves as the catalytic N6-AMP-lysine intermediate. Residues R224, R239, E268, F306, R377, and K383 each coordinate ATP.

It belongs to the ATP-dependent DNA ligase family. Mg(2+) is required as a cofactor.

It catalyses the reaction ATP + (deoxyribonucleotide)n-3'-hydroxyl + 5'-phospho-(deoxyribonucleotide)m = (deoxyribonucleotide)n+m + AMP + diphosphate.. Functionally, DNA ligase that seals nicks in double-stranded DNA during DNA replication, DNA recombination and DNA repair. This chain is Probable DNA ligase, found in Beutenbergia cavernae (strain ATCC BAA-8 / DSM 12333 / CCUG 43141 / JCM 11478 / NBRC 16432 / NCIMB 13614 / HKI 0122).